We begin with the raw amino-acid sequence, 415 residues long: Tyrosine--tRNA ligase (415 aa).

L-tyrosine is bound at residue Tyr34. The short motif at Pro39 to Asn48 is the 'HIGH' region element. Tyr163 and Gln167 together coordinate L-tyrosine. Positions Lys225–Ser229 match the 'KMSKS' region motif. Lys228 serves as a coordination point for ATP. One can recognise an S4 RNA-binding domain in the interval Glu349–Lys414.

This sequence belongs to the class-I aminoacyl-tRNA synthetase family. TyrS type 1 subfamily. As to quaternary structure, homodimer.

It is found in the cytoplasm. The enzyme catalyses tRNA(Tyr) + L-tyrosine + ATP = L-tyrosyl-tRNA(Tyr) + AMP + diphosphate + H(+). Catalyzes the attachment of tyrosine to tRNA(Tyr) in a two-step reaction: tyrosine is first activated by ATP to form Tyr-AMP and then transferred to the acceptor end of tRNA(Tyr). This chain is Tyrosine--tRNA ligase, found in Mycoplasma mobile (strain ATCC 43663 / 163K / NCTC 11711) (Mesomycoplasma mobile).